We begin with the raw amino-acid sequence, 81 residues long: Large ribosomal subunit protein bL28 (81 aa).

It belongs to the bacterial ribosomal protein bL28 family.

This is Large ribosomal subunit protein bL28 from Gloeobacter violaceus (strain ATCC 29082 / PCC 7421).